The chain runs to 343 residues: uncharacterized protein (343 aa).

Belongs to the IIV-6 219L family.

This is an uncharacterized protein from Invertebrate iridescent virus 6 (IIV-6).